A 72-amino-acid chain; its full sequence is High-potential iron-sulfur protein isozyme 1 (72 aa).

At A1 the chain carries N-carbamoylalanine; partial. Residues C34, C37, C51, and C65 each coordinate [4Fe-4S] cluster.

Belongs to the high-potential iron-sulfur protein (HiPIP) family. As to quaternary structure, homodimer.

Its function is as follows. Specific class of high-redox-potential 4Fe-4S ferredoxins. Functions in anaerobic electron transport in most purple and in some other photosynthetic bacteria and in at least one genus (Paracoccus) of halophilic, denitrifying bacteria. In Ectothiorhodospira mobilis, this protein is High-potential iron-sulfur protein isozyme 1.